We begin with the raw amino-acid sequence, 162 residues long: Probable E3 ubiquitin-protein ligase XERICO (162 aa).

The helical transmembrane segment at 12–28 threads the bilayer; sequence GMLCVILVNTALSISIV. The RING-type; atypical zinc finger occupies 103–145; that stretch reads CSVCLSKFQGDSEINKLKCGHLFHKTCLEKWIDYWNITCPLCR.

Interacts with UBC8 and TULP9. In terms of tissue distribution, ubiquitous. Higher expression in actively growing tissues.

It localises to the membrane. It carries out the reaction S-ubiquitinyl-[E2 ubiquitin-conjugating enzyme]-L-cysteine + [acceptor protein]-L-lysine = [E2 ubiquitin-conjugating enzyme]-L-cysteine + N(6)-ubiquitinyl-[acceptor protein]-L-lysine.. The protein operates within protein modification; protein ubiquitination. Function on abscisic acid homeostasis at post-translational level, probably through ubiquitin/proteasome-dependent substrate-specific degradation. This is Probable E3 ubiquitin-protein ligase XERICO (XERICO) from Arabidopsis thaliana (Mouse-ear cress).